The following is a 428-amino-acid chain: GTPase Obg (428 aa).

Positions 1 to 158 constitute an Obg domain; that stretch reads MFIDQVKIYV…RDVILELKVL (158 aa). The OBG-type G domain maps to 159–329; it reads ADVGLVGFPS…LLFEVANLIE (171 aa). Residues 165-172, 190-194, 212-215, 282-285, and 310-312 contribute to the GTP site; these read GFPSVGKS, FTTIV, DLPG, NKMD, and SAV. Residues S172 and T192 each contribute to the Mg(2+) site. Residues 350–428 form the OCT domain; it reads KFETEGVKFD…ILEYEFEFID (79 aa).

The protein belongs to the TRAFAC class OBG-HflX-like GTPase superfamily. OBG GTPase family. Monomer. It depends on Mg(2+) as a cofactor.

The protein localises to the cytoplasm. An essential GTPase which binds GTP, GDP and possibly (p)ppGpp with moderate affinity, with high nucleotide exchange rates and a fairly low GTP hydrolysis rate. Plays a role in control of the cell cycle, stress response, ribosome biogenesis and in those bacteria that undergo differentiation, in morphogenesis control. The protein is GTPase Obg of Bacillus anthracis.